The following is a 48-amino-acid chain: ATP synthase protein 8 (48 aa).

Residues 12–32 (LLTGGILAISLLLYFVATYLL) traverse the membrane as a helical segment.

This sequence belongs to the ATPase protein 8 family. In terms of assembly, F-type ATPases have 2 components, CF(1) - the catalytic core - and CF(0) - the membrane proton channel.

Its subcellular location is the mitochondrion membrane. Its function is as follows. Mitochondrial membrane ATP synthase (F(1)F(0) ATP synthase or Complex V) produces ATP from ADP in the presence of a proton gradient across the membrane which is generated by electron transport complexes of the respiratory chain. F-type ATPases consist of two structural domains, F(1) - containing the extramembraneous catalytic core and F(0) - containing the membrane proton channel, linked together by a central stalk and a peripheral stalk. During catalysis, ATP synthesis in the catalytic domain of F(1) is coupled via a rotary mechanism of the central stalk subunits to proton translocation. Part of the complex F(0) domain. Minor subunit located with subunit a in the membrane. The protein is ATP synthase protein 8 (ATP8) of Candida parapsilosis (Yeast).